The chain runs to 521 residues: AAA ATPase forming ring-shaped complexes (521 aa).

Residues 4-44 (TEDLAALNDRLMAKNHALAEALNRAGKELTKAKSRLAQLAQ) are a coiled coil. 235-240 (GNGKTM) contributes to the ATP binding site.

Belongs to the AAA ATPase family. Homohexamer. Assembles into a hexameric ring structure.

The sequence is that of AAA ATPase forming ring-shaped complexes from Bifidobacterium longum subsp. infantis (strain ATCC 15697 / DSM 20088 / JCM 1222 / NCTC 11817 / S12).